We begin with the raw amino-acid sequence, 312 residues long: Methionyl-tRNA formyltransferase (312 aa).

Residue 109-112 (SLLP) participates in (6S)-5,6,7,8-tetrahydrofolate binding.

This sequence belongs to the Fmt family.

It catalyses the reaction L-methionyl-tRNA(fMet) + (6R)-10-formyltetrahydrofolate = N-formyl-L-methionyl-tRNA(fMet) + (6S)-5,6,7,8-tetrahydrofolate + H(+). Attaches a formyl group to the free amino group of methionyl-tRNA(fMet). The formyl group appears to play a dual role in the initiator identity of N-formylmethionyl-tRNA by promoting its recognition by IF2 and preventing the misappropriation of this tRNA by the elongation apparatus. In Listeria monocytogenes serovar 1/2a (strain ATCC BAA-679 / EGD-e), this protein is Methionyl-tRNA formyltransferase.